We begin with the raw amino-acid sequence, 181 residues long: Acetolactate synthase small subunit (181 aa).

The ACT domain maps to 4–78 (TLSVLVEDES…NVLKIQDITN (75 aa)).

This sequence belongs to the acetolactate synthase small subunit family. In terms of assembly, dimer of large and small chains.

The protein localises to the plastid. Its subcellular location is the chloroplast. It catalyses the reaction 2 pyruvate + H(+) = (2S)-2-acetolactate + CO2. The protein operates within amino-acid biosynthesis; L-isoleucine biosynthesis; L-isoleucine from 2-oxobutanoate: step 1/4. It participates in amino-acid biosynthesis; L-valine biosynthesis; L-valine from pyruvate: step 1/4. The chain is Acetolactate synthase small subunit (ilvH) from Galdieria sulphuraria (Red alga).